The chain runs to 54 residues: MKIFFAILLILAVCSMAIWTVNGTPFAIKCATDADCSRKCPGNPPCRNGFCACT.

The signal sequence occupies residues 1–23 (MKIFFAILLILAVCSMAIWTVNG). 3 cysteine pairs are disulfide-bonded: Cys30/Cys46, Cys36/Cys51, and Cys40/Cys53.

The protein belongs to the short scorpion toxin superfamily. Potassium channel inhibitor family. Alpha-KTx 14 subfamily. As to expression, expressed by the venom gland.

It is found in the secreted. Inhibits potassium channels. May be active towards small conductance calcium-activated potassium channels (KCNN, SK), and less active towards voltage-gated potassium channels (Kv/KCN). This is Potassium channel toxin alpha-KTx 14.2 from Olivierus martensii (Manchurian scorpion).